The following is a 66-amino-acid chain: uncharacterized protein (66 aa).

This is an uncharacterized protein from Saccharomyces cerevisiae (strain ATCC 204508 / S288c) (Baker's yeast).